Here is a 503-residue protein sequence, read N- to C-terminus: 5'-3' exonuclease PLD4 (503 aa).

The Cytoplasmic portion of the chain corresponds to 1–36 (MDKKKEHPEMRIPLQTAVEVSDWPCSTSHDPHSGLG). The chain crosses the membrane as a signal-anchor for type II membrane protein span at residues 37–57 (MVLGMLAVLGLSSVTLILFLW). The Lumenal portion of the chain corresponds to 58–503 (QGATSFTSHR…RQVPSQDCVW (446 aa)). N-linked (GlcNAc...) asparagine glycosylation is found at N89, N148, and N169. The cysteines at positions 92 and 248 are disulfide-linked. Residues 207-234 (TGGVLHSKFWVVDGRHIYVGSANMDWRS) form the PLD phosphodiesterase 1 domain. Residues H212, K214, and D219 contribute to the active site. H212 serves as the catalytic Proton donor. N-linked (GlcNAc...) asparagine glycans are attached at residues N247, N279, N415, and N425. The cysteines at positions 377 and 501 are disulfide-linked. Positions 421–447 (FSRVNHSKFMVTDKTAYVGTSNWSEDY) constitute a PLD phosphodiesterase 2 domain. Residues H426, K428, and D433 contribute to the active site. H426 serves as the catalytic Nucleophile. N442 carries N-linked (GlcNAc...) asparagine glycosylation.

It belongs to the phospholipase D family. Highly N-glycosylated. Enriched in the white matter of early postnatal brains, as well as in splenic marginal zone cells. Highly expressed in dendritic cells (DCs) and other myeloid cells, with lower expression in B cell.

The protein localises to the endoplasmic reticulum membrane. Its subcellular location is the golgi apparatus. It localises to the trans-Golgi network membrane. The protein resides in the nucleus. It is found in the early endosome. The protein localises to the cytoplasmic vesicle. Its subcellular location is the phagosome. It localises to the lysosome. It carries out the reaction Exonucleolytic cleavage in the 5'- to 3'-direction to yield nucleoside 3'-phosphates.. The enzyme catalyses a 5'-end 5'-dephospho-ribonucleotidyl-ribonucleotide-RNA + H2O = a ribonucleoside 3'-phosphate + a 5'-end dephospho-ribonucleoside-RNA + H(+). It catalyses the reaction a ribonucleoside 3'-phosphate-2'-3'-cyclophospho-GMP + H2O = a ribonucleoside 3'-phosphate + 2',3'-cyclophospho-GMP + H(+). The catalysed reaction is a 5'-end 5'-dephospho-2'-deoxyribonucleotidyl-2'-deoxyribonucleotide in single-stranded DNA + H2O = a 5'-end dephospho-2'-deoxyribonucleoside in single-stranded DNA + a 2'-deoxyribonucleoside 3'-phosphate + H(+). It carries out the reaction a 5'-end 5'-phospho-2'-deoxyribonucleotide in single-stranded DNA + H2O = a 5'-end 5'-dephospho-2'-deoxyribonucleotide in single-stranded DNA + phosphate. The enzyme catalyses a 3-lyso-sn-glycero-1-phospho-(3'-acyl-1'-sn-glycerol) + a 1-acyl-sn-glycerol = a 3-acyl-sn-glycero-1-phospho-(3'-acyl-1'-sn-glycerol) + glycerol. It catalyses the reaction 3-lyso-sn-glycero-1-phospho-(3'-(9Z-octadecenoyl)-1'-sn-glycerol) + 1-(9Z-octadecenoyl)-sn-glycerol = 3-(9Z-octadecenoyl)-sn-glycero-1-phospho-(3'-(9Z-octadecenoyl)-1'-sn-glycerol) + glycerol. With respect to regulation, the exonuclease activity toward ssDNA substrate is Ca(2+) and Mg(2+)-independent, but it is inhibited by Fe(2+), Cu(2+) and to a lesser extent Zn(2+) ions. Its function is as follows. 5'-&gt;3' exonuclease that hydrolyzes the phosphodiester bond of single-stranded DNA (ssDNA) and RNA molecules to form nucleoside 3'-monophosphates and 5'-end 5'-hydroxy deoxyribonucleotide/ribonucleotide fragments. Partially redundant with PLD4, can cleave all four nucleotides displaying higher efficiency for ssDNA and RNA fragments initiated with uridine and guanosine residues and lower efficiency for cytidine-initiated substrates. As a result, it does not always degrade polynucleotides to the single nucleotide level, it can stall at specific sites sparing certain fragments from exonucleolytic degradation. Processes self and pathogenic ssDNA and RNA molecules that reach the endolysosomal compartment via phagocytosis or autophagy and may serve as 'danger' signals for recognition by innate immune receptors such as toll-like receptors (TLRs). Degrades mitochondrial CpG-rich ssDNA fragments to prevent TLR9 activation and autoinflammatory response, but it can cleave viral RNA to generate ligands for TLR7 activation and initiate antiviral immune responses. In plasmacytoid dendritic cells, it cooperates with endonuclease RNASET2 to release 2',3'-cyclic guanosine monophosphate (2',3'-cGMP), a potent stimulatory ligand for TLR7. Produces 2',3'-cGMPs and cytidine-rich RNA fragments that occupy TLR7 ligand-binding pockets and trigger a signaling-competent state. Can exert polynucleotide phosphatase activity toward 5'-phosphorylated ssDNA substrates although at a slow rate. Transphosphatidylase that catalyzes the exchange with R to S stereo-inversion of the glycerol moiety between (S,R)-lysophosphatidylglycerol (LPG) and monoacylglycerol (MAG) substrates to yield (S,S)-bis(monoacylglycero)phosphate (BMP). Can synthesize a variety of (S,S)-BMPs representing the main phospholipid constituent of lysosomal intralumenal vesicle (ILV) membranes that bind acid hydrolases for lipid degradation. Regulates the homeostasis and interorganellar communication of the endolysosomal system with an overall impact on cellular removal of dysfunctional organelles via autophagy as well as proper protein and lipid turnover. May play a role in myotube formation in response to ER stress. In Mus musculus (Mouse), this protein is 5'-3' exonuclease PLD4.